A 321-amino-acid chain; its full sequence is Necdin (321 aa).

Residues 1–96 (MSEQSKDLSD…QPGPAPPAPA (96 aa)) are disordered. Positions 20-35 (SEVHSSPGVSEGVPPS) are enriched in low complexity. The 200-residue stretch at 98-297 (LVQKAHELMW…QAWPSRYREA (200 aa)) folds into the MAGE domain.

In terms of assembly, binds to the transactivation domains of E2F1 and p53. Binds also SV40 large T antigen and adenovirus E1A. Interacts with nucleobindin 1 and 2. In terms of tissue distribution, almost ubiquitous. Detected in fetal brain, lung, liver and kidney; in adult heart, brain, placenta, lung, liver, skeletal muscle, kidney, pancreas, spleen, thymus, prostate, testis, ovary, small intestine and colon. Not detected in peripheral blood leukocytes. In brain, restricted to post-mitotic neurons.

The protein localises to the perikaryon. The protein resides in the nucleus. Growth suppressor that facilitates the entry of the cell into cell cycle arrest. Functionally similar to the retinoblastoma protein it binds to and represses the activity of cell-cycle-promoting proteins such as SV40 large T antigen, adenovirus E1A, and the transcription factor E2F. Necdin also interacts with p53 and works in an additive manner to inhibit cell growth. Also functions as a transcription factor and directly binds to specific guanosine-rich DNA sequences. The polypeptide is Necdin (NDN) (Homo sapiens (Human)).